Here is a 505-residue protein sequence, read N- to C-terminus: Tyrosine-protein kinase Blk (505 aa).

The disordered stretch occupies residues 1-37 (MGLVSSKKPDKEKPIKEKDKGQWSPLKVSAQDKDAPP). A lipid anchor (N-myristoyl glycine) is attached at Gly2. The segment covering 7–21 (KKPDKEKPIKEKDKG) has biased composition (basic and acidic residues). Positions 58-118 (EDKHFVVALY…PSNFVARVES (61 aa)) constitute an SH3 domain. Residues 124 to 220 (WFFRSQGRKE…GLCQRLTLPC (97 aa)) form the SH2 domain. The 254-residue stretch at 241–494 (LRLVRKLGSG…FLQSVLEDFY (254 aa)) folds into the Protein kinase domain. ATP contacts are provided by residues 247 to 255 (LGSGQFGEV) and Lys269. Residue Asp360 is the Proton acceptor of the active site. Tyr389 carries the post-translational modification Phosphotyrosine; by autocatalysis.

It belongs to the protein kinase superfamily. Tyr protein kinase family. SRC subfamily. In terms of assembly, interacts with CBL (via SH2 domain). Interacts with CD79A and CD79B (via SH2 domain). Post-translationally, phosphorylated on tyrosine residues after antibody-mediated surface engagement of the B-cell antigen receptor (BCR). In terms of processing, ubiquitination of activated BLK by the UBE3A ubiquitin protein ligase leads to its degradation by the ubiquitin-proteasome pathway. As to expression, expressed in lymphatic organs, pancreatic islets, Leydig cells, striate ducts of salivary glands and hair follicles.

Its subcellular location is the cell membrane. It catalyses the reaction L-tyrosyl-[protein] + ATP = O-phospho-L-tyrosyl-[protein] + ADP + H(+). Antibody-mediated surface engagement of the B-cell antigen receptor (BCR) which results in the phosphorylation of BLK on tyrosine residues, stimulates the enzymatic activity. Non-receptor tyrosine kinase involved in B-lymphocyte development, differentiation and signaling. B-cell receptor (BCR) signaling requires a tight regulation of several protein tyrosine kinases and phosphatases, and associated coreceptors. Binding of antigen to the B-cell antigen receptor (BCR) triggers signaling that ultimately leads to B-cell activation. Signaling through BLK plays an important role in transmitting signals through surface immunoglobulins and supports the pro-B to pre-B transition, as well as the signaling for growth arrest and apoptosis downstream of B-cell receptor. Specifically binds and phosphorylates CD79A at 'Tyr-188'and 'Tyr-199', as well as CD79B at 'Tyr-196' and 'Tyr-207'. Also phosphorylates the immunoglobulin G receptors FCGR2A, FCGR2B and FCGR2C. With FYN and LYN, plays an essential role in pre-B-cell receptor (pre-BCR)-mediated NF-kappa-B activation. Also contributes to BTK activation by indirectly stimulating BTK intramolecular autophosphorylation. In pancreatic islets, acts as a modulator of beta-cells function through the up-regulation of PDX1 and NKX6-1 and consequent stimulation of insulin secretion in response to glucose. Phosphorylates CGAS, promoting retention of CGAS in the cytosol. The polypeptide is Tyrosine-protein kinase Blk (BLK) (Homo sapiens (Human)).